The following is a 311-amino-acid chain: Peptide methionine sulfoxide reductase MsrA/MsrB 2 (311 aa).

Residues 1–155 (MHEIYLAGGC…PNGYCHINVN (155 aa)) form a peptide methionine sulfoxide reductase A region. Residue cysteine 10 is part of the active site. The 124-residue stretch at 172–295 (DEELKKTLSP…NSLSIRFIPK (124 aa)) folds into the MsrB domain. Catalysis depends on cysteine 284, which acts as the Nucleophile.

It in the N-terminal section; belongs to the MsrA Met sulfoxide reductase family. This sequence in the C-terminal section; belongs to the MsrB Met sulfoxide reductase family.

The enzyme catalyses L-methionyl-[protein] + [thioredoxin]-disulfide + H2O = L-methionyl-(S)-S-oxide-[protein] + [thioredoxin]-dithiol. It carries out the reaction [thioredoxin]-disulfide + L-methionine + H2O = L-methionine (S)-S-oxide + [thioredoxin]-dithiol. The catalysed reaction is L-methionyl-[protein] + [thioredoxin]-disulfide + H2O = L-methionyl-(R)-S-oxide-[protein] + [thioredoxin]-dithiol. Functionally, has an important function as a repair enzyme for proteins that have been inactivated by oxidation. Catalyzes the reversible oxidation-reduction of methionine sulfoxide in proteins to methionine. The sequence is that of Peptide methionine sulfoxide reductase MsrA/MsrB 2 (msrAB2) from Streptococcus pneumoniae serotype 4 (strain ATCC BAA-334 / TIGR4).